The primary structure comprises 293 residues: Fructose-bisphosphate aldolase (293 aa).

Residue serine 50 participates in D-glyceraldehyde 3-phosphate binding. Residue aspartate 85 is the Proton donor of the active site. The Zn(2+) site is built by histidine 86, aspartate 106, glutamate 136, and histidine 178. Residue glycine 179 coordinates dihydroxyacetone phosphate. Histidine 208 is a binding site for Zn(2+). Dihydroxyacetone phosphate is bound by residues 209–211 (GGS) and 230–233 (NVNT).

It belongs to the class II fructose-bisphosphate aldolase family. Zn(2+) serves as cofactor.

It carries out the reaction beta-D-fructose 1,6-bisphosphate = D-glyceraldehyde 3-phosphate + dihydroxyacetone phosphate. Its pathway is carbohydrate degradation; glycolysis; D-glyceraldehyde 3-phosphate and glycerone phosphate from D-glucose: step 4/4. Catalyzes the aldol condensation of dihydroxyacetone phosphate (DHAP or glycerone-phosphate) with glyceraldehyde 3-phosphate (G3P) to form fructose 1,6-bisphosphate (FBP) in gluconeogenesis and the reverse reaction in glycolysis. The sequence is that of Fructose-bisphosphate aldolase (fba) from Streptococcus pyogenes serotype M6 (strain ATCC BAA-946 / MGAS10394).